The primary structure comprises 477 residues: PTS system glucose-specific EIICB component (477 aa).

Topologically, residues 1–14 are cytoplasmic; sequence MFKNAFANLQKVGK. One can recognise a PTS EIIC type-1 domain in the interval 1–388; sequence MFKNAFANLQ…LDLKTPGRED (388 aa). Residues 15-35 form a helical membrane-spanning segment; that stretch reads SLMLPVSVLPIAGILLGVGSA. Residues 36 to 50 are Periplasmic-facing; that stretch reads NFSWLPAVVSHVMAE. A helical membrane pass occupies residues 51 to 71; that stretch reads AGGSVFANMPLIFAIGVALGF. Topologically, residues 72-79 are cytoplasmic; it reads TNNDGVSA. The helical transmembrane segment at 80–100 threads the bilayer; that stretch reads LAAVVAYGIMVKTMAVVAPLV. Residues 101–111 are Periplasmic-facing; sequence LHLPAEEIASK. The helical transmembrane segment at 112–132 threads the bilayer; the sequence is HLADTGVLGGIISGAIAAYMF. The Cytoplasmic portion of the chain corresponds to 133 to 151; sequence NRFYRIKLPEYLGFFAGKR. The helical transmembrane segment at 152 to 172 threads the bilayer; sequence FVPIISGLAAIFTGVVLSFIW. Topologically, residues 173–190 are periplasmic; the sequence is PPIGSAIQTFSQWAAYQN. A helical transmembrane segment spans residues 191-211; the sequence is PVVAFGIYGFIERCLVPFGLH. Over 212–249 the chain is Cytoplasmic; sequence HIWNVPFQMQIGEYTNAAGQVFHGDIPRYMAGDPTAGK. A helical transmembrane segment spans residues 250 to 270; that stretch reads LSGGFLFKMYGLPAAAIAIWH. Topologically, residues 271–279 are periplasmic; it reads SAKPENRAK. A helical transmembrane segment spans residues 280-300; that stretch reads VGGIMISAALTSFLTGITEPI. Topologically, residues 301–309 are cytoplasmic; it reads EFSFMFVAP. Residues 310–330 traverse the membrane as a helical segment; it reads ILYIIHAILAGLAFPICILLG. Topologically, residues 331 to 355 are periplasmic; that stretch reads MRDGTSFSHGLIDFIVLSGNSSKLW. Residues 356 to 376 form a helical membrane-spanning segment; that stretch reads LFPIVGIGYAIVYYTIFRVLI. The Cytoplasmic segment spans residues 377–477; that stretch reads KALDLKTPGR…TEMDEYIRNH (101 aa). The region spanning 399 to 477 is the PTS EIIB type-1 domain; it reads SEMAPALVAA…TEMDEYIRNH (79 aa). Catalysis depends on cysteine 421, which acts as the Phosphocysteinsyse intermediate; for EIIB activity. Cysteine 421 is modified (phosphocysteine).

The protein localises to the cell inner membrane. The catalysed reaction is N(pros)-phospho-L-histidyl-[protein] + D-glucose(out) = D-glucose 6-phosphate(in) + L-histidyl-[protein]. The phosphoenolpyruvate-dependent sugar phosphotransferase system (sugar PTS), a major carbohydrate active transport system, catalyzes the phosphorylation of incoming sugar substrates concomitantly with their translocation across the cell membrane. The enzyme II complex composed of PtsG and Crr is involved in glucose transport. Also functions as a chemoreceptor monitoring the environment for changes in sugar concentration. The chain is PTS system glucose-specific EIICB component (ptsG) from Escherichia coli O6:H1 (strain CFT073 / ATCC 700928 / UPEC).